Consider the following 344-residue polypeptide: MNSITLLQPDDWHAHLRDGLALKRTVPDLAKQFARAICMPNLVPPVKTVEEALAYRERILAHVPEGNNFDPRMVLYFTDHTSPDEVRKIKESEHVNAIKLYPAGATTNSNNGVSDIRKVYAVIEQLEEHQVPLLLHGEVTHNHVDIFDREKRFLDEVLSPLLKQFPKLKVVLEHITTSDAAHFVLEQDRNVAATITPQHLLFNRNDMLVGGIKPYFYCLPILKRQTHQTTLLEVATSGNPKFFLGTDSAPHAQNAKENACGCAGCYSAPNAIELYAQAFDQVGKLERLEGFASHFGADFYGLPRNTSTITLVKEDNLVPESFDYLDNQKIIPLHAGKTLQWRKV.

Positions 13 and 15 each coordinate Zn(2+). Substrate-binding positions include histidine 15–arginine 17 and asparagine 41. Zn(2+) is bound by residues lysine 99, histidine 136, and histidine 174. Lysine 99 is subject to N6-carboxylysine. A substrate-binding site is contributed by histidine 136. Leucine 219 contributes to the substrate binding site. Residue aspartate 247 coordinates Zn(2+). The active site involves aspartate 247. Substrate is bound by residues histidine 251 and alanine 263.

This sequence belongs to the metallo-dependent hydrolases superfamily. DHOase family. Class II DHOase subfamily. In terms of assembly, homodimer. Requires Zn(2+) as cofactor.

The enzyme catalyses (S)-dihydroorotate + H2O = N-carbamoyl-L-aspartate + H(+). It participates in pyrimidine metabolism; UMP biosynthesis via de novo pathway; (S)-dihydroorotate from bicarbonate: step 3/3. In terms of biological role, catalyzes the reversible cyclization of carbamoyl aspartate to dihydroorotate. The chain is Dihydroorotase from Acinetobacter baumannii (strain SDF).